Reading from the N-terminus, the 134-residue chain is Large ribosomal subunit protein uL16c (134 aa).

The segment at 1–22 (MLSPKRTRFRKQHRGRMKGISH) is disordered.

It belongs to the universal ribosomal protein uL16 family. Part of the 50S ribosomal subunit.

It localises to the plastid. The protein resides in the chloroplast. This is Large ribosomal subunit protein uL16c from Nicotiana tabacum (Common tobacco).